A 35-amino-acid chain; its full sequence is Pheromone-binding protein (35 aa).

The protein belongs to the PBP/GOBP family. In terms of tissue distribution, antenna.

In terms of biological role, this major soluble protein in olfactory sensilla of male moths might serve to solubilize the extremely hydrophobic pheromone molecules and to transport pheromone through the aqueous lymph to receptors located on olfactory cilia. The sequence is that of Pheromone-binding protein from Hyalophora cecropia (Cecropia moth).